The chain runs to 264 residues: MSKITSSTLRTFKQEGKKFTALTAYDASFAGAFDSEGIDVLLVGDSMGMVLQGHSDTLPVTVEEIAYHTRCVRRGIERALLIADMPFMSYATPEQTMINATTLMQAGANMVKVEGGKWLLESVAMLTERGIPVCAHLGLTPQSVHVFGGFKVQGRDADNAQRILDEAKALEAAGAQLLVVECIPAPLAKAITDALTIPVIGIGAGKDTDGQILVMHDVLGISSGYIPRFSKNYLKQTGEIRAAVRAYIDEVAQGIFPGSEHTFN.

Asp-45 and Asp-84 together coordinate Mg(2+). 3-methyl-2-oxobutanoate-binding positions include 45–46 (DS), Asp-84, and Lys-112. Glu-114 provides a ligand contact to Mg(2+). The active-site Proton acceptor is the Glu-181.

Belongs to the PanB family. As to quaternary structure, homodecamer; pentamer of dimers. Requires Mg(2+) as cofactor.

The protein resides in the cytoplasm. The enzyme catalyses 3-methyl-2-oxobutanoate + (6R)-5,10-methylene-5,6,7,8-tetrahydrofolate + H2O = 2-dehydropantoate + (6S)-5,6,7,8-tetrahydrofolate. The protein operates within cofactor biosynthesis; (R)-pantothenate biosynthesis; (R)-pantoate from 3-methyl-2-oxobutanoate: step 1/2. Catalyzes the reversible reaction in which hydroxymethyl group from 5,10-methylenetetrahydrofolate is transferred onto alpha-ketoisovalerate to form ketopantoate. The sequence is that of 3-methyl-2-oxobutanoate hydroxymethyltransferase from Shewanella pealeana (strain ATCC 700345 / ANG-SQ1).